A 362-amino-acid chain; its full sequence is Probable dual-specificity RNA methyltransferase RlmN (362 aa).

Glu-99 serves as the catalytic Proton acceptor. The 237-residue stretch at 105–341 folds into the Radical SAM core domain; it reads SPDRHTVCVS…VTVRKSQGAS (237 aa). Cys-112 and Cys-346 are joined by a disulfide. Residues Cys-119, Cys-123, and Cys-126 each contribute to the [4Fe-4S] cluster site. S-adenosyl-L-methionine contacts are provided by residues 171–172, Ser-204, 227–229, and Asn-303; these read GE and SLH. The S-methylcysteine intermediate role is filled by Cys-346.

The protein belongs to the radical SAM superfamily. RlmN family. Requires [4Fe-4S] cluster as cofactor.

The protein localises to the cytoplasm. The enzyme catalyses adenosine(2503) in 23S rRNA + 2 reduced [2Fe-2S]-[ferredoxin] + 2 S-adenosyl-L-methionine = 2-methyladenosine(2503) in 23S rRNA + 5'-deoxyadenosine + L-methionine + 2 oxidized [2Fe-2S]-[ferredoxin] + S-adenosyl-L-homocysteine. The catalysed reaction is adenosine(37) in tRNA + 2 reduced [2Fe-2S]-[ferredoxin] + 2 S-adenosyl-L-methionine = 2-methyladenosine(37) in tRNA + 5'-deoxyadenosine + L-methionine + 2 oxidized [2Fe-2S]-[ferredoxin] + S-adenosyl-L-homocysteine. Its function is as follows. Specifically methylates position 2 of adenine 2503 in 23S rRNA and position 2 of adenine 37 in tRNAs. This is Probable dual-specificity RNA methyltransferase RlmN from Chlorobium phaeobacteroides (strain BS1).